Here is a 319-residue protein sequence, read N- to C-terminus: Forkhead box protein B1 (319 aa).

A DNA-binding region (fork-head) is located at residues 13 to 107; it reads KPPYSYISLT…ENGSFLRRRK (95 aa). Residues 278–310 form a disordered region; it reads LSNSSPSMSPTSPQTATSQSSPATPSDTLTNPS. Residues 279–305 show a composition bias toward low complexity; sequence SNSSPSMSPTSPQTATSQSSPATPSDT.

In early gastrulae, expressed in the inner layer of the posterior dorsal ectoderm and in non-involuted mesoderm. By the mid-gastrula stage, expressed solely in the posterior ectoderm. At the end of gastrulation, expressed in ectodermal regions fated to become diencephalon, midbrain and hindbrain, and weakly expressed in regions fated to become spinal cord and tailbud. At the neurula stage, expressed in the midbrain and posterior forebrain (diencephalon) but not in the more anterior forebrain (telencephalon). Also expressed posteriorly in rhombomere 5. At tailbud stages, expression remains in the anterior brain and is also detectable along the length of the central nervous system and in the tailbud.

The protein resides in the nucleus. In terms of biological role, probable transcription factor. May be involved in the early anteroposterior patterning of the neuroectoderm. The polypeptide is Forkhead box protein B1 (Xenopus laevis (African clawed frog)).